The chain runs to 411 residues: MNYGEKSPALWDAIKSEEKRQEDTIELIASENIVSDAVREAQGSVLTNKYAEGYPGKRYYGGCQYIDKVEQLAIDYAKKLFNAEYANVQPHSGSQANMTVYNALLKPGDTILGMGMDAGGHLTHGSKVNFSGKIFNSISYDLNPETEELDFDRIRQLAIEKKPKLIIAGASAYSRIIDWQKFREIADEVGAYLMVDMAHIAGLVATGAHPSPVPIADVVTTTTHKTLRGPRGGMILSNNKELGKKIDSALFPGTQGGPLEHVIAAKAQAFYEDLQPEFTQYIDQVIKNSKAMAEEFKNSKNIRVVSGGTDNHLMIIDITKTGVTGKDAQNLLDSVNITTNKESIPGDKRSPFITSGLRIGTPAITSRGFKEPDAKEVAKIIIEVLDKPEDAGVLAEAKERVNDLVQKYPIK.

120 to 122 (GHL) contributes to the (6S)-5,6,7,8-tetrahydrofolate binding site. Lys225 is modified (N6-(pyridoxal phosphate)lysine). A (6S)-5,6,7,8-tetrahydrofolate-binding site is contributed by 350–352 (SPF).

It belongs to the SHMT family. As to quaternary structure, homodimer. It depends on pyridoxal 5'-phosphate as a cofactor.

It is found in the cytoplasm. The catalysed reaction is (6R)-5,10-methylene-5,6,7,8-tetrahydrofolate + glycine + H2O = (6S)-5,6,7,8-tetrahydrofolate + L-serine. Its pathway is one-carbon metabolism; tetrahydrofolate interconversion. It participates in amino-acid biosynthesis; glycine biosynthesis; glycine from L-serine: step 1/1. Functionally, catalyzes the reversible interconversion of serine and glycine with tetrahydrofolate (THF) serving as the one-carbon carrier. This reaction serves as the major source of one-carbon groups required for the biosynthesis of purines, thymidylate, methionine, and other important biomolecules. Also exhibits THF-independent aldolase activity toward beta-hydroxyamino acids, producing glycine and aldehydes, via a retro-aldol mechanism. This is Serine hydroxymethyltransferase from Lactobacillus johnsonii (strain CNCM I-12250 / La1 / NCC 533).